The primary structure comprises 189 residues: Der GTPase-activating protein YihI (189 aa).

The tract at residues 1–81 (MARKKKTRRV…ALAKKDPRLG (81 aa)) is disordered. Composition is skewed to basic and acidic residues over residues 9 to 27 (RVSD…ELPK) and 35 to 46 (TRYELDAKARED). Positions 60-71 (RHSATENNNNHQ) are enriched in polar residues.

Belongs to the YihI family. In terms of assembly, interacts with Der.

Functionally, a GTPase-activating protein (GAP) that modifies Der/EngA GTPase function. May play a role in ribosome biogenesis. The chain is Der GTPase-activating protein YihI from Pasteurella multocida (strain Pm70).